Here is a 71-residue protein sequence, read N- to C-terminus: ATP synthase subunit c 1 (71 aa).

Transmembrane regions (helical) follow at residues 4-24 (FIGA…VGHV) and 46-66 (LFVG…IALL).

This sequence belongs to the ATPase C chain family. As to quaternary structure, F-type ATPases have 2 components, F(1) - the catalytic core - and F(0) - the membrane proton channel. F(1) has five subunits: alpha(3), beta(3), gamma(1), delta(1), epsilon(1). F(0) has four main subunits: a(1), b(1), b'(1) and c(10-14). The alpha and beta chains form an alternating ring which encloses part of the gamma chain. F(1) is attached to F(0) by a central stalk formed by the gamma and epsilon chains, while a peripheral stalk is formed by the delta, b and b' chains.

It is found in the cell inner membrane. Functionally, f(1)F(0) ATP synthase produces ATP from ADP in the presence of a proton or sodium gradient. F-type ATPases consist of two structural domains, F(1) containing the extramembraneous catalytic core and F(0) containing the membrane proton channel, linked together by a central stalk and a peripheral stalk. During catalysis, ATP synthesis in the catalytic domain of F(1) is coupled via a rotary mechanism of the central stalk subunits to proton translocation. Key component of the F(0) channel; it plays a direct role in translocation across the membrane. A homomeric c-ring of between 10-14 subunits forms the central stalk rotor element with the F(1) delta and epsilon subunits. The sequence is that of ATP synthase subunit c 1 from Cereibacter sphaeroides (strain ATCC 17029 / ATH 2.4.9) (Rhodobacter sphaeroides).